Here is a 186-residue protein sequence, read N- to C-terminus: Type 1 phosphatases regulator ypi-1 (186 aa).

Residues 1 to 32 show a composition bias toward polar residues; it reads MTSVAQRQAQPAQPSTSQTAAPTRTQTETSSP. Residues 1–186 are disordered; sequence MTSVAQRQAQ…SETQGPGGSK (186 aa). The span at 82-94 shows a compositional bias: low complexity; that stretch reads DSSSSSDSSSSSD. Over residues 122 to 137 the composition is skewed to basic and acidic residues; it reads HDHDHDGREGGCNHDH. Residues 138-151 are compositionally biased toward basic residues; that stretch reads GRGRKHGNKGKKTE.

This sequence belongs to the YPI1 family.

It localises to the nucleus. In terms of biological role, regulator of type 1 phosphatases which maintains protein phosphatase activity under strict control. The polypeptide is Type 1 phosphatases regulator ypi-1 (ypi-1) (Neurospora crassa (strain ATCC 24698 / 74-OR23-1A / CBS 708.71 / DSM 1257 / FGSC 987)).